The following is a 487-amino-acid chain: N-succinylglutamate 5-semialdehyde dehydrogenase (487 aa).

221–226 (GSSDTG) contributes to the NAD(+) binding site. Residues E244 and C278 contribute to the active site.

It belongs to the aldehyde dehydrogenase family. AstD subfamily.

It catalyses the reaction N-succinyl-L-glutamate 5-semialdehyde + NAD(+) + H2O = N-succinyl-L-glutamate + NADH + 2 H(+). The protein operates within amino-acid degradation; L-arginine degradation via AST pathway; L-glutamate and succinate from L-arginine: step 4/5. Catalyzes the NAD-dependent reduction of succinylglutamate semialdehyde into succinylglutamate. In Burkholderia cenocepacia (strain HI2424), this protein is N-succinylglutamate 5-semialdehyde dehydrogenase.